The following is a 107-amino-acid chain: Phosphoribosyl-ATP pyrophosphatase (107 aa).

This sequence belongs to the PRA-PH family.

It localises to the cytoplasm. It catalyses the reaction 1-(5-phospho-beta-D-ribosyl)-ATP + H2O = 1-(5-phospho-beta-D-ribosyl)-5'-AMP + diphosphate + H(+). It participates in amino-acid biosynthesis; L-histidine biosynthesis; L-histidine from 5-phospho-alpha-D-ribose 1-diphosphate: step 2/9. This is Phosphoribosyl-ATP pyrophosphatase (hisE) from Neisseria meningitidis serogroup A / serotype 4A (strain DSM 15465 / Z2491).